Reading from the N-terminus, the 448-residue chain is GA-binding protein subunit beta-2 (448 aa).

ANK repeat units lie at residues 5-34 (DLGK…PFTT), 37-66 (LGTS…SRDA), 70-99 (VDRT…DVNA), 103-132 (LKMT…DVHA), and 136-166 (FDKS…QVNV). Position 256 is a phosphoserine (serine 256). Disordered stretches follow at residues 325–354 (EEEE…GNER) and 420–448 (ELEE…TVSS). Over residues 337-354 (RIGEKTNSVEESKEGNER) the composition is skewed to basic and acidic residues. A coiled-coil region spans residues 345-395 (VEESKEGNERELLQQQLQEANRRAQEYRHQLLKKEQEAEQYRLKLEAIARQ). Residues 428 to 448 (VTGSAGTTEPHTRVSMATVSS) are compositionally biased toward polar residues.

In terms of assembly, heterotetramer of two alpha and two beta subunits. The C-terminal is necessary for the formation of a heterotetrameric GABP-alpha-2/beta-2 complex, and also facilitates homotypic dimerization. Interacts with ADGRB2.

Its subcellular location is the nucleus. Functionally, may function as transcription factor capable of interacting with purine rich repeats (GA repeats). This Homo sapiens (Human) protein is GA-binding protein subunit beta-2 (GABPB2).